The primary structure comprises 208 residues: Heavy metal-associated isoprenylated plant protein 42 (208 aa).

Positions 6 to 70 constitute an HMA domain; that stretch reads FPICILKMNL…AVAKLGQSPQ (65 aa). Residues 93-116 form a disordered region; that stretch reads ATNKTQDKPSPPAPPVTATTPVET. Cys-205 is subject to Cysteine methyl ester. The S-farnesyl cysteine moiety is linked to residue Cys-205. Positions 206–208 are cleaved as a propeptide — removed in mature form; it reads SIM.

This sequence belongs to the HIPP family.

Its function is as follows. Probable heavy-metal-binding protein. This is Heavy metal-associated isoprenylated plant protein 42 from Arabidopsis thaliana (Mouse-ear cress).